The sequence spans 62 residues: Photosystem II reaction center protein Z (62 aa).

2 helical membrane-spanning segments follow: residues 8 to 28 (ALIS…VAYA) and 41 to 61 (WLGS…NFFV).

The protein belongs to the PsbZ family. As to quaternary structure, PSII is composed of 1 copy each of membrane proteins PsbA, PsbB, PsbC, PsbD, PsbE, PsbF, PsbH, PsbI, PsbJ, PsbK, PsbL, PsbM, PsbT, PsbX, PsbY, PsbZ, Psb30/Ycf12, peripheral proteins PsbO, CyanoQ (PsbQ), PsbU, PsbV and a large number of cofactors. It forms dimeric complexes.

It is found in the cellular thylakoid membrane. May control the interaction of photosystem II (PSII) cores with the light-harvesting antenna, regulates electron flow through the 2 photosystem reaction centers. PSII is a light-driven water plastoquinone oxidoreductase, using light energy to abstract electrons from H(2)O, generating a proton gradient subsequently used for ATP formation. The protein is Photosystem II reaction center protein Z of Trichormus variabilis (strain ATCC 29413 / PCC 7937) (Anabaena variabilis).